The chain runs to 230 residues: Cytochrome c oxidase subunit 2 (230 aa).

Topologically, residues 1-14 (MAHPAQLGFQDAAS) are mitochondrial intermembrane. A helical transmembrane segment spans residues 15–45 (PVMEELLCFHDHALMIVFLISTLVLYIIIAM). Topologically, residues 46-59 (VSTKLTNKFILDSQ) are mitochondrial matrix. The helical transmembrane segment at 60–87 (EIEIVWTVLPAIILILIALPSLRILYLM) threads the bilayer. Residues 88-230 (DEINDPHVTI…NWSSAMLEDA (143 aa)) lie on the Mitochondrial intermembrane side of the membrane. His161, Cys196, Glu198, Cys200, His204, and Met207 together coordinate Cu cation. Glu198 serves as a coordination point for Mg(2+).

Belongs to the cytochrome c oxidase subunit 2 family. As to quaternary structure, component of the cytochrome c oxidase (complex IV, CIV), a multisubunit enzyme composed of 14 subunits. The complex is composed of a catalytic core of 3 subunits MT-CO1, MT-CO2 and MT-CO3, encoded in the mitochondrial DNA, and 11 supernumerary subunits COX4I, COX5A, COX5B, COX6A, COX6B, COX6C, COX7A, COX7B, COX7C, COX8 and NDUFA4, which are encoded in the nuclear genome. The complex exists as a monomer or a dimer and forms supercomplexes (SCs) in the inner mitochondrial membrane with NADH-ubiquinone oxidoreductase (complex I, CI) and ubiquinol-cytochrome c oxidoreductase (cytochrome b-c1 complex, complex III, CIII), resulting in different assemblies (supercomplex SCI(1)III(2)IV(1) and megacomplex MCI(2)III(2)IV(2)). Found in a complex with TMEM177, COA6, COX18, COX20, SCO1 and SCO2. Interacts with TMEM177 in a COX20-dependent manner. Interacts with COX20. Interacts with COX16. Cu cation serves as cofactor.

Its subcellular location is the mitochondrion inner membrane. It carries out the reaction 4 Fe(II)-[cytochrome c] + O2 + 8 H(+)(in) = 4 Fe(III)-[cytochrome c] + 2 H2O + 4 H(+)(out). Component of the cytochrome c oxidase, the last enzyme in the mitochondrial electron transport chain which drives oxidative phosphorylation. The respiratory chain contains 3 multisubunit complexes succinate dehydrogenase (complex II, CII), ubiquinol-cytochrome c oxidoreductase (cytochrome b-c1 complex, complex III, CIII) and cytochrome c oxidase (complex IV, CIV), that cooperate to transfer electrons derived from NADH and succinate to molecular oxygen, creating an electrochemical gradient over the inner membrane that drives transmembrane transport and the ATP synthase. Cytochrome c oxidase is the component of the respiratory chain that catalyzes the reduction of oxygen to water. Electrons originating from reduced cytochrome c in the intermembrane space (IMS) are transferred via the dinuclear copper A center (CU(A)) of subunit 2 and heme A of subunit 1 to the active site in subunit 1, a binuclear center (BNC) formed by heme A3 and copper B (CU(B)). The BNC reduces molecular oxygen to 2 water molecules using 4 electrons from cytochrome c in the IMS and 4 protons from the mitochondrial matrix. The protein is Cytochrome c oxidase subunit 2 (mt-co2) of Danio rerio (Zebrafish).